A 222-amino-acid polypeptide reads, in one-letter code: MATASSLFLASPVATAPTARARSTPSASPARPSLRLRRPSTLAAAAVQAEHQPAVAAAPKPPALPFRVGHGFDLHRLEPGLPLIIGGIDIPHDRGCDAHSDGDVLLHCVVDAILGALGLPDIGQIFPDSDPRWKGADSSVFMREAVKLMHEAGYELGNLDATLILQKPKISPFKETIRSNLCDLLGADPSVVNLKAKTHEKVDSLGENRSIAAHTVVLLMRK.

The N-terminal 43 residues, 1 to 43 (MATASSLFLASPVATAPTARARSTPSASPARPSLRLRRPSTLA), are a transit peptide targeting the chloroplast. Positions 73 and 75 each coordinate a divalent metal cation. Residues 73–75 (DLH), 99–100 (HS), 103–111 (DVLLHCVVD), 121–123 (DIG), 126–130 (FPDSD), Asp130, 165–171 (LQKPKIS), and 196–200 (AKTHE) contribute to the substrate site. His107 contacts a divalent metal cation.

Belongs to the IspF family. As to quaternary structure, homotrimer. It depends on a divalent metal cation as a cofactor. Expressed in roots, leaves, stems, leaf sheaths and young panicles.

Its subcellular location is the plastid. It is found in the chloroplast. The catalysed reaction is 4-CDP-2-C-methyl-D-erythritol 2-phosphate = 2-C-methyl-D-erythritol 2,4-cyclic diphosphate + CMP. It participates in isoprenoid biosynthesis; isopentenyl diphosphate biosynthesis via DXP pathway; isopentenyl diphosphate from 1-deoxy-D-xylulose 5-phosphate: step 4/6. Functionally, enzyme of the plastid non-mevalonate pathway for isoprenoid biosynthesis that converts 4-diphosphocytidyl-2C-methyl-D-erythritol 2-phosphate into 2C-methyl-D-erythritol 2,4-cyclodiphosphate and CMP. Is essential for chloroplast development. The chain is 2-C-methyl-D-erythritol 2,4-cyclodiphosphate synthase, chloroplastic from Oryza sativa subsp. japonica (Rice).